The chain runs to 255 residues: Acetylglutamate kinase (255 aa).

Residues Gly-40–Gly-41, Arg-62, and Asn-153 contribute to the substrate site.

The protein belongs to the acetylglutamate kinase family. ArgB subfamily.

The protein localises to the cytoplasm. It carries out the reaction N-acetyl-L-glutamate + ATP = N-acetyl-L-glutamyl 5-phosphate + ADP. It participates in amino-acid biosynthesis; L-arginine biosynthesis; N(2)-acetyl-L-ornithine from L-glutamate: step 2/4. Its function is as follows. Catalyzes the ATP-dependent phosphorylation of N-acetyl-L-glutamate. This chain is Acetylglutamate kinase, found in Bacillus anthracis (strain A0248).